Consider the following 357-residue polypeptide: Tetraacyldisaccharide 4'-kinase (357 aa).

67–74 is a binding site for ATP; that stretch reads SVGGTGKT.

Belongs to the LpxK family.

The catalysed reaction is a lipid A disaccharide + ATP = a lipid IVA + ADP + H(+). The protein operates within glycolipid biosynthesis; lipid IV(A) biosynthesis; lipid IV(A) from (3R)-3-hydroxytetradecanoyl-[acyl-carrier-protein] and UDP-N-acetyl-alpha-D-glucosamine: step 6/6. In terms of biological role, transfers the gamma-phosphate of ATP to the 4'-position of a tetraacyldisaccharide 1-phosphate intermediate (termed DS-1-P) to form tetraacyldisaccharide 1,4'-bis-phosphate (lipid IVA). In Syntrophotalea carbinolica (strain DSM 2380 / NBRC 103641 / GraBd1) (Pelobacter carbinolicus), this protein is Tetraacyldisaccharide 4'-kinase.